The primary structure comprises 440 residues: Thymidine phosphorylase (440 aa).

It belongs to the thymidine/pyrimidine-nucleoside phosphorylase family. Homodimer.

The enzyme catalyses thymidine + phosphate = 2-deoxy-alpha-D-ribose 1-phosphate + thymine. The protein operates within pyrimidine metabolism; dTMP biosynthesis via salvage pathway; dTMP from thymine: step 1/2. The enzymes which catalyze the reversible phosphorolysis of pyrimidine nucleosides are involved in the degradation of these compounds and in their utilization as carbon and energy sources, or in the rescue of pyrimidine bases for nucleotide synthesis. This chain is Thymidine phosphorylase, found in Erwinia tasmaniensis (strain DSM 17950 / CFBP 7177 / CIP 109463 / NCPPB 4357 / Et1/99).